A 178-amino-acid polypeptide reads, in one-letter code: Large ribosomal subunit protein uL6 (178 aa).

This sequence belongs to the universal ribosomal protein uL6 family. In terms of assembly, part of the 50S ribosomal subunit.

Its function is as follows. This protein binds to the 23S rRNA, and is important in its secondary structure. It is located near the subunit interface in the base of the L7/L12 stalk, and near the tRNA binding site of the peptidyltransferase center. In Wolinella succinogenes (strain ATCC 29543 / DSM 1740 / CCUG 13145 / JCM 31913 / LMG 7466 / NCTC 11488 / FDC 602W) (Vibrio succinogenes), this protein is Large ribosomal subunit protein uL6.